The sequence spans 203 residues: Outer-membrane lipoprotein carrier protein (203 aa).

The first 21 residues, 1 to 21, serve as a signal peptide directing secretion; sequence MKKLLVACCLLSGFASTSVLA.

The protein belongs to the LolA family. As to quaternary structure, monomer.

It localises to the periplasm. Participates in the translocation of lipoproteins from the inner membrane to the outer membrane. Only forms a complex with a lipoprotein if the residue after the N-terminal Cys is not an aspartate (The Asp acts as a targeting signal to indicate that the lipoprotein should stay in the inner membrane). This Serratia proteamaculans (strain 568) protein is Outer-membrane lipoprotein carrier protein.